A 341-amino-acid chain; its full sequence is MDHEAEAHRTDLMTITRYVLNEQSRHQESRGDFTILLSHIVLGCKFVCSAVNKAGLAKLIGLAGETNVQGGSKRKLDVLSNEVFVKALISSGRTCILVSEEDEEATFVDPSLRGKYCVVFDPLDGSSNIDCGVSIGTIFGVYMVKDKDNVTLDEVLQPGKNMLAAGYCMYGSSCTLVLSTGSGVNGFTLDPSLGEFILTHPDIKIPKKGKIYSVNEGNAKNWDGPTTKYVEKCKFPKDGDSPKSLRYIGSMVADVHRTLLYGGIFLYPADKKSPNGKLRVLYEVFPMSFLMEQAGGQAFTGKQRALDLVPTKIHQRSPIFLGSYDEVEEIKALYAAEENTA.

Mg(2+)-binding residues include Glu-100, Asp-121, Leu-123, and Asp-124. Substrate is bound by residues 124–127 (DGSS), Asn-215, Tyr-247, Tyr-267, and Lys-277. Glu-283 is a Mg(2+) binding site.

It belongs to the FBPase class 1 family. It depends on Mg(2+) as a cofactor.

The protein localises to the cytoplasm. It catalyses the reaction beta-D-fructose 1,6-bisphosphate + H2O = beta-D-fructose 6-phosphate + phosphate. This chain is Fructose-1,6-bisphosphatase, cytosolic (FBPban1), found in Musa acuminata (Banana).